The primary structure comprises 69 residues: Conotoxin Eb6.1 (69 aa).

The N-terminal stretch at V1 to A17 is a signal peptide. The propeptide occupies E18–R41. Disulfide bonds link C43/C57, C50/C61, and C56/C68.

This sequence belongs to the conotoxin O1 superfamily. In terms of tissue distribution, expressed by the venom duct.

Its subcellular location is the secreted. The chain is Conotoxin Eb6.1 (E1) from Conus ebraeus (Hebrew cone).